Here is a 2703-residue protein sequence, read N- to C-terminus: Serine/arginine repetitive matrix protein 2 (2703 aa).

M1 is subject to N-acetylmethionine. Residues 60-92 (HERKRRVELRCLELEEMMEEQGYEEQQIQEKVA) adopt a coiled-coil conformation. K101 carries the N6-acetyllysine modification. Glycyl lysine isopeptide (Lys-Gly) (interchain with G-Cter in SUMO2) cross-links involve residues K108 and K130. The tract at residues 141-1007 (ISDSYVDGSS…SGSFHLCPGV (867 aa)) is disordered. At Y145 the chain carries Phosphotyrosine. K169 is modified (N6-acetyllysine). 2 stretches are compositionally biased toward basic residues: residues 186–197 (KQKKKKKKKDRG) and 207–249 (RERK…KRSR). The segment at 197-259 (GRRSESSSPR…STTPAPKSRR (63 aa)) is sufficient for RNA-binding. Residues S220 and S222 each carry the phosphoserine modification. Residues 263–284 (STSADSASSSDTSRSRSRSAAA) are compositionally biased toward low complexity. A phosphoserine mark is found at S295, S300, S310, S322, and S323. A compositionally biased stretch (low complexity) spans 319–334 (QQPSSPAPSTKQSSSP). Basic and acidic residues predominate over residues 335-345 (YEDKDKKEKSA). 4 positions are modified to phosphoserine: S349, S351, S355, and S356. Phosphothreonine occurs at positions 357 and 365. Residues S375, S385, S393, S396, S402, S406, S422, S433, S434, S435, S438, S452, S482, S484, S503, S505, S507, S531, S533, and S540 each carry the phosphoserine modification. A compositionally biased stretch (polar residues) spans 383–396 (PSSQEPVNPSSEAS). The span at 425 to 437 (PTKGSRHASSSPE) shows a compositional bias: polar residues. Positions 459–533 (NRSHGRAKRD…SPQRRGRSRS (75 aa)) are enriched in basic residues. Positions 534 to 543 (PQRPGWSRSR) are enriched in low complexity. 3 stretches are compositionally biased toward basic residues: residues 544–561 (NTQR…RSHS), 568–721 (GRSR…RRGR), and 730–740 (NKSRTSQRRSR). Phosphoserine occurs at positions 700, 702, and 704. A phosphoserine mark is found at S773, S775, and S778. A compositionally biased stretch (low complexity) spans 785 to 817 (SQTPTRRSRSGSSPPKQKSKTPPRQSRSNSPQP). Residues S821 and S829 each carry the phosphoserine modification. 2 stretches are compositionally biased toward polar residues: residues 829–851 (SVTN…SESS) and 859–874 (RTPS…PRVK). Phosphothreonine is present on residues T831 and T841. 3 positions are modified to phosphoserine: S846, S850, and S851. Low complexity-rich tracts occupy residues 875 to 891 (SSTP…SPQP) and 898 to 919 (SPRG…TSRT). A phosphoserine mark is found at S882, S909, S924, S926, S928, S940, S942, S944, S945, S946, and S949. Position 955 is a phosphothreonine (T955). The segment covering 960–1000 (SGSTSPYLKSMLQTPPDQNLSGSKSPCPQKSRDSPTGSSGS) has biased composition (polar residues). Phosphoserine occurs at positions 962 and 964. Y966 carries the post-translational modification Phosphotyrosine. A Phosphothreonine modification is found at T973. Phosphoserine occurs at positions 980, 984, and 993. The residue at position 995 (T995) is a Phosphothreonine. S997, S1000, S1011, S1037, and S1038 each carry phosphoserine. Over residues 1024–1057 (VQQKGHTQTWPDTSSPEVMQTQVESPLLQSKSQT) the composition is skewed to polar residues. Positions 1024–1112 (VQQKGHTQTW…TKPDSSIYPL (89 aa)) are disordered. T1044 bears the Phosphothreonine mark. A phosphoserine mark is found at S1048, S1064, S1066, S1067, and S1068. Positions 1058–1068 (SPKGSLSRSSS) are enriched in low complexity. Phosphothreonine is present on T1071. Residues S1077, S1087, S1094, S1097, S1117, S1151, S1159, S1175, S1188, S1216, S1225, S1229, S1230, S1269, S1276, S1278, S1284, S1287, S1294, S1305, S1325, S1338, S1339, S1340, S1343, S1359, and S1360 each carry the phosphoserine modification. Basic and acidic residues predominate over residues 1079–1092 (VKQDKSEISTDPKL). Residues 1136–2092 (IQEDVASSCI…RSPGMLEPLG (957 aa)) are disordered. A compositionally biased stretch (basic and acidic residues) spans 1146-1158 (PRDKFSPTQDRPE). Residues 1270 to 1284 (PEHKELSHSPPRENS) are compositionally biased toward basic and acidic residues. Residues 1285-1304 (FESSLEFKNSGPVSEVNTGF) are compositionally biased toward polar residues. Position 1370 is a phosphothreonine (T1370). The segment covering 1371–1387 (PSRERSSSASPELKDGL) has biased composition (basic and acidic residues). Residues S1372, S1378, and S1380 each carry the phosphoserine modification. T1390 carries the post-translational modification Phosphothreonine. Positions 1397–1408 (SGSSPGLRDGSG) are enriched in low complexity. Phosphoserine occurs at positions 1400 and 1407. T1409 carries the phosphothreonine modification. Positions 1409 to 1431 (TPSRHSLSGSSPGMKDTPQTPSR) are enriched in polar residues. Residues S1414, S1416, S1418, and S1419 each carry the phosphoserine modification. Phosphothreonine is present on T1428. 2 positions are modified to phosphoserine: S1438 and S1439. T1448 carries the phosphothreonine modification. 5 positions are modified to phosphoserine: S1453, S1455, S1457, S1458, and S1465. A compositionally biased stretch (polar residues) spans 1454 to 1468 (HSPSSPERNNKSVTP). T1467 is subject to Phosphothreonine. 4 positions are modified to phosphoserine: S1473, S1475, S1477, and S1478. Positions 1475–1489 (SESSVEQKNLARTSP) are enriched in polar residues. T1487 bears the Phosphothreonine mark. Positions 1490-1499 (GQRSRSGSSQ) are enriched in low complexity. 5 positions are modified to phosphoserine: S1493, S1495, S1497, S1498, and S1508. The segment covering 1511-1523 (ERSESDSSPDSKP) has biased composition (basic and acidic residues). Positions 1524–1533 (KTRTPLRQRS) are enriched in basic residues. Phosphoserine occurs at positions 1533, 1535, 1537, 1538, 1554, 1556, 1557, 1572, 1576, 1577, 1604, 1614, 1647, 1649, and 1650. Residues 1604–1613 (SPEGSSSSES) show a composition bias toward low complexity. A compositionally biased stretch (basic residues) spans 1637–1647 (KSHTPPRRRSS). T1654 is modified (phosphothreonine). Phosphoserine is present on residues S1683, S1685, S1687, S1688, S1718, and S1720. Basic residues-rich tracts occupy residues 1725–1745 (GLQR…RRRD) and 1754–1772 (SRRR…RRRG). Phosphoserine occurs at positions 1774, 1778, 1810, 1813, 1832, and 1834. Over residues 1776-1789 (YHSRSPTRQESSRT) the composition is skewed to low complexity. Positions 1790-1810 (SSRRRRGRSRTPLTSRKRSRS) are enriched in basic residues. Residues 1818–2020 (KRSRSRASPA…PRAARGKRSL (203 aa)) show a composition bias toward basic residues. Residue T1836 is modified to Phosphothreonine. A phosphoserine mark is found at S1840 and S1846. T1848 is subject to Phosphothreonine. A phosphoserine mark is found at S1849, S1869, S1872, S1876, and S1878. 2 positions are modified to phosphothreonine: T1880 and T1884. 2 positions are modified to phosphoserine: S1898 and S1900. T1902 and T1906 each carry phosphothreonine. S1910 and S1912 each carry phosphoserine. A phosphothreonine mark is found at T1914 and T1918. Phosphoserine occurs at positions 1922, 1924, and 1927. T1930 carries the phosphothreonine modification. Phosphoserine occurs at positions 1936, 1939, 1948, 1951, 1960, 1963, 1970, and 1972. T1974 carries the phosphothreonine modification. A phosphoserine mark is found at S1982 and S1984. The residue at position 1986 (T1986) is a Phosphothreonine. Residues S1994, S1996, S1998, and S2019 each carry the phosphoserine modification. T2021 carries the phosphothreonine modification. Residues 2022 to 2047 (RSPPAIRRRSASGSSSDRSRSATPPA) show a composition bias toward low complexity. Phosphoserine occurs at positions 2023 and 2042. Phosphothreonine is present on T2044. 2 positions are modified to phosphoserine: S2052 and S2054. T2056 carries the post-translational modification Phosphothreonine. Residues 2062-2076 (SSSRMSCFSRPSMSP) show a composition bias toward low complexity. Phosphoserine is present on residues S2070, S2073, S2075, and S2084. T2096 carries the phosphothreonine modification. Residues R2146, R2159, R2183, and R2198 each carry the omega-N-methylarginine modification. S2224 is modified (phosphoserine). Omega-N-methylarginine is present on residues R2226 and R2240. A phosphothreonine mark is found at T2241 and T2254. Phosphoserine is present on S2262. Residues 2263–2703 (LTGSGTPPTA…SNRHRSSRSP (441 aa)) are disordered. Phosphothreonine occurs at positions 2268 and 2281. A compositionally biased stretch (polar residues) spans 2269–2283 (PPTAANYPSSSRTPQ). R2295 bears the Omega-N-methylarginine mark. Phosphoserine occurs at positions 2296, 2321, and 2329. At T2334 the chain carries Phosphothreonine. S2335 carries the post-translational modification Phosphoserine. Position 2337 is an asymmetric dimethylarginine; alternate (R2337). R2337 bears the Omega-N-methylarginine; alternate mark. Residues S2347, S2351, and S2360 each carry the phosphoserine modification. Position 2362 is a phosphothreonine (T2362). S2365, S2368, S2381, S2384, S2404, and S2408 each carry phosphoserine. Polar residues-rich tracts occupy residues 2410–2443 (FSDQ…SASD) and 2467–2476 (TGAQQPSTLA). Residues 2487–2521 (SSSSSSSSSSSSSSSSSSSSSSSSGSSSSDSEGSS) show a composition bias toward low complexity. S2535 bears the Phosphoserine mark. Position 2537 is a phosphothreonine (T2537). K2541 is covalently cross-linked (Glycyl lysine isopeptide (Lys-Gly) (interchain with G-Cter in SUMO2)). T2553 is subject to Phosphothreonine. A compositionally biased stretch (low complexity) spans 2562-2602 (SSSSSSSSSSSSSSSSSSSSSSSSSSSSSSSSSSSSSSSSS). Positions 2605-2622 (PAKPGPQALPKPASPKKP) are enriched in pro residues. Residues S2618, S2629, S2631, S2638, S2642, S2644, S2646, S2648, S2656, and S2660 each carry the phosphoserine modification. The span at 2623–2643 (PPGERRSRSPRKPIDSLRDSR) shows a compositional bias: basic and acidic residues. T2689 is subject to Phosphothreonine. S2691 bears the Phosphoserine mark. The span at 2694-2703 (SNRHRSSRSP) shows a compositional bias: basic residues.

Belongs to the CWC21 family. Component of pre-catalytic, catalytic and post-catalytic spliceosome complexes. Found in a pre-mRNA splicing complex with SFRS4, SFRS5, SNRP70, SNRPA1, SRRM1 and SRRM2. Component of the minor spliceosome, which splices U12-type introns. Interacts with DHX8. Interacts with CACTIN.

It localises to the nucleus. Its subcellular location is the nucleus speckle. Required for pre-mRNA splicing as component of the spliceosome. As a component of the minor spliceosome, involved in the splicing of U12-type introns in pre-mRNAs. The polypeptide is Serine/arginine repetitive matrix protein 2 (Srrm2) (Mus musculus (Mouse)).